A 198-amino-acid chain; its full sequence is Putative glutathione S-transferase alpha-2 (198 aa).

Residue S2 is modified to N-acetylserine. The 77-residue stretch at 5–81 folds into the GST N-terminal domain; that stretch reads SVPSLTYFQG…YIAKKHNFMG (77 aa). Residues Y11, R45, 52-53, and 65-66 contribute to the glutathione site; these read QL and QS. One can recognise a GST C-terminal domain in the interval 83–198; the sequence is NLEEEFLVDQ…YIKERPETKF (116 aa).

The protein belongs to the GST superfamily. Alpha family.

The enzyme catalyses RX + glutathione = an S-substituted glutathione + a halide anion + H(+). Functionally, conjugation of reduced glutathione to a wide number of exogenous and endogenous hydrophobic electrophiles. This is Putative glutathione S-transferase alpha-2 (gsta2-1) from Dictyostelium discoideum (Social amoeba).